We begin with the raw amino-acid sequence, 335 residues long: Dihydroorotate dehydrogenase (quinone) (335 aa).

FMN-binding positions include 59-63 (AGLDK) and Thr83. Lys63 contacts substrate. A substrate-binding site is contributed by 108 to 112 (NRMGF). FMN-binding residues include Asn136 and Asn169. Asn169 contributes to the substrate binding site. Ser172 functions as the Nucleophile in the catalytic mechanism. Substrate is bound at residue Asn174. 2 residues coordinate FMN: Lys214 and Thr242. Substrate is bound at residue 243 to 244 (NT). Residues Gly265, Gly294, and 315-316 (YS) contribute to the FMN site.

It belongs to the dihydroorotate dehydrogenase family. Type 2 subfamily. In terms of assembly, monomer. FMN serves as cofactor.

It localises to the cell membrane. It catalyses the reaction (S)-dihydroorotate + a quinone = orotate + a quinol. It functions in the pathway pyrimidine metabolism; UMP biosynthesis via de novo pathway; orotate from (S)-dihydroorotate (quinone route): step 1/1. In terms of biological role, catalyzes the conversion of dihydroorotate to orotate with quinone as electron acceptor. The chain is Dihydroorotate dehydrogenase (quinone) from Neisseria meningitidis serogroup B (strain ATCC BAA-335 / MC58).